A 227-amino-acid chain; its full sequence is Cytidylate kinase (227 aa).

7–15 (GPSGAGKGT) is a binding site for ATP.

Belongs to the cytidylate kinase family. Type 1 subfamily.

Its subcellular location is the cytoplasm. The catalysed reaction is CMP + ATP = CDP + ADP. It carries out the reaction dCMP + ATP = dCDP + ADP. The polypeptide is Cytidylate kinase (Actinobacillus succinogenes (strain ATCC 55618 / DSM 22257 / CCUG 43843 / 130Z)).